The primary structure comprises 249 residues: Probable amino-acid import ATP-binding protein YxeO (249 aa).

Positions 2 to 239 (ITVKNIRKAF…PKNERTKRFI (238 aa)) constitute an ABC transporter domain. Residue 34–41 (GPSGSGKS) participates in ATP binding.

Belongs to the ABC transporter superfamily. As to quaternary structure, the complex is composed of two ATP-binding proteins (YxeO), two transmembrane proteins (YxeN) and a solute-binding protein (YxeM).

The protein resides in the cell membrane. Functionally, probably part of the ABC transporter complex YxeMNO that could be involved in amino-acid import. May transport S-methylcysteine. Responsible for energy coupling to the transport system. This chain is Probable amino-acid import ATP-binding protein YxeO (yxeO), found in Bacillus subtilis (strain 168).